Consider the following 197-residue polypeptide: uncharacterized protein (197 aa).

Residues 1–31 form a disordered region; that stretch reads MMHFRKKSSISNTSDHDGANRASDVKISEDD. 2 positions are modified to phosphoserine: Ser-11 and Ser-23. Residues 14–31 are compositionally biased toward basic and acidic residues; it reads SDHDGANRASDVKISEDD. Glycyl lysine isopeptide (Lys-Gly) (interchain with G-Cter in ubiquitin) cross-links involve residues Lys-26 and Lys-32. Positions 157–197 are disordered; sequence VGGASSQMYGEQAVYQPQQHVQTEEKQKKKKKGLFGRMKKK. Residues 158 to 177 show a composition bias toward polar residues; it reads GGASSQMYGEQAVYQPQQHV. The segment covering 184-197 has biased composition (basic residues); the sequence is KKKKKGLFGRMKKK.

It to yeast YGR273c.

This is an uncharacterized protein from Saccharomyces cerevisiae (strain ATCC 204508 / S288c) (Baker's yeast).